Here is a 343-residue protein sequence, read N- to C-terminus: Uroporphyrinogen decarboxylase (343 aa).

Residues 23–27 (RQAGR), Asp-73, Tyr-149, Thr-204, and His-320 contribute to the substrate site.

Belongs to the uroporphyrinogen decarboxylase family. As to quaternary structure, homodimer.

The protein localises to the cytoplasm. The catalysed reaction is uroporphyrinogen III + 4 H(+) = coproporphyrinogen III + 4 CO2. It functions in the pathway porphyrin-containing compound metabolism; protoporphyrin-IX biosynthesis; coproporphyrinogen-III from 5-aminolevulinate: step 4/4. Functionally, catalyzes the decarboxylation of four acetate groups of uroporphyrinogen-III to yield coproporphyrinogen-III. The sequence is that of Uroporphyrinogen decarboxylase from Bradyrhizobium sp. (strain BTAi1 / ATCC BAA-1182).